A 149-amino-acid chain; its full sequence is Putative glycine cleavage system H protein 3 (149 aa).

Residues 39-121 (TCTLGITKYA…EDKGWLIKME (83 aa)) form the Lipoyl-binding domain. N6-lipoyllysine is present on Lys80.

This sequence belongs to the GcvH family. As to quaternary structure, the glycine cleavage system is composed of four proteins: P, T, L and H. Requires (R)-lipoate as cofactor.

The glycine cleavage system catalyzes the degradation of glycine. The H protein shuttles the methylamine group of glycine from the P protein to the T protein. This chain is Putative glycine cleavage system H protein 3 (gcvH3), found in Dictyostelium discoideum (Social amoeba).